The chain runs to 214 residues: Adenylate kinase (214 aa).

ATP is bound at residue 10–15 (GAGKGT). An NMP region spans residues 30–59 (STGDMLRAAIKAGTELGKQAKAVIDAGQLV). Residues Thr31, Arg36, 57–59 (QLV), 85–88 (GFPR), and Gln92 each bind AMP. The interval 122-159 (GRRAHLPSGRTYHVVYNPPKVEGKDDVTGEDLVIREDD) is LID. ATP is bound by residues Arg123 and 132–133 (TY). Residues Arg156 and Arg167 each contribute to the AMP site. Residue Lys200 coordinates ATP.

This sequence belongs to the adenylate kinase family. As to quaternary structure, monomer.

The protein localises to the cytoplasm. It catalyses the reaction AMP + ATP = 2 ADP. The protein operates within purine metabolism; AMP biosynthesis via salvage pathway; AMP from ADP: step 1/1. Its function is as follows. Catalyzes the reversible transfer of the terminal phosphate group between ATP and AMP. Plays an important role in cellular energy homeostasis and in adenine nucleotide metabolism. The polypeptide is Adenylate kinase (Vibrio cholerae serotype O1 (strain ATCC 39541 / Classical Ogawa 395 / O395)).